Here is a 311-residue protein sequence, read N- to C-terminus: tRNA-cytidine(32) 2-sulfurtransferase (311 aa).

Residues 47 to 52 carry the PP-loop motif motif; that stretch reads SGGKDS. The [4Fe-4S] cluster site is built by Cys122, Cys125, and Cys213.

It belongs to the TtcA family. As to quaternary structure, homodimer. The cofactor is Mg(2+). It depends on [4Fe-4S] cluster as a cofactor.

It localises to the cytoplasm. It carries out the reaction cytidine(32) in tRNA + S-sulfanyl-L-cysteinyl-[cysteine desulfurase] + AH2 + ATP = 2-thiocytidine(32) in tRNA + L-cysteinyl-[cysteine desulfurase] + A + AMP + diphosphate + H(+). It participates in tRNA modification. Functionally, catalyzes the ATP-dependent 2-thiolation of cytidine in position 32 of tRNA, to form 2-thiocytidine (s(2)C32). The sulfur atoms are provided by the cysteine/cysteine desulfurase (IscS) system. This is tRNA-cytidine(32) 2-sulfurtransferase from Shigella flexneri serotype 5b (strain 8401).